Consider the following 422-residue polypeptide: uncharacterized protein (422 aa).

12 helical membrane passes run Ile-23–Asp-43, Ala-47–Val-67, Ala-90–Met-110, Leu-112–Pro-132, Ala-151–Pro-171, Ser-172–Ile-192, Ile-228–Ala-248, Ile-263–Leu-283, Tyr-291–Ile-308, Val-318–Ile-340, Val-352–Gly-372, and Gly-381–Phe-401.

It belongs to the major facilitator superfamily.

Its subcellular location is the cell membrane. This is an uncharacterized protein from Bacillus subtilis (strain 168).